A 316-amino-acid polypeptide reads, in one-letter code: Endochitinase 2 (316 aa).

The first 18 residues, 1–18 (EFTTLFLLFSVLLLSASA), serve as a signal peptide directing secretion. Residues 19-60 (EQCGSQAGGALCASGLCCSKFGWCGNTNDYCGPGNCQSQCPG) form the Chitin-binding type-1 domain. 7 cysteine pairs are disulfide-bonded: cysteine 21–cysteine 36, cysteine 30–cysteine 42, cysteine 35–cysteine 49, cysteine 54–cysteine 58, cysteine 87–cysteine 150, cysteine 162–cysteine 170, and cysteine 269–cysteine 301. Residue glutamate 132 is the Proton donor of the active site. Residues 310-316 (GLLVDTV) constitute a propeptide, removed in mature form, vacuolar targeting.

Belongs to the glycosyl hydrolase 19 family. Chitinase class I subfamily.

The protein resides in the vacuole. The enzyme catalyses Random endo-hydrolysis of N-acetyl-beta-D-glucosaminide (1-&gt;4)-beta-linkages in chitin and chitodextrins.. Functionally, defense against chitin-containing fungal pathogens. In Solanum tuberosum (Potato), this protein is Endochitinase 2 (CHTB2).